The sequence spans 83 residues: Hainantoxin-III 6 (83 aa).

The N-terminal stretch at Met1–Ala21 is a signal peptide. A propeptide spanning residues Ser22–Arg48 is cleaved from the precursor. 3 disulfide bridges follow: Cys50–Cys65, Cys57–Cys70, and Cys64–Cys77. The residue at position 81 (Leu81) is a Leucine amide.

Belongs to the neurotoxin 10 (Hwtx-1) family. 15 (Hntx-3) subfamily. Monomer. In terms of tissue distribution, expressed by the venom gland.

It is found in the secreted. Its function is as follows. Selective antagonist of neuronal tetrodotoxin (TTX)-sensitive voltage-gated sodium channels (IC(50)=1270 nM on Nav1.1/SCN1A, 270 nM on Nav1.2/SCN2A, 491 nM on Nav1.3/SCN3A and 232 nM on Nav1.7/SCN9A). This toxin suppress Nav1.7 current amplitude without significantly altering the activation, inactivation, and repriming kinetics. Short extreme depolarizations partially activate the toxin-bound channel, indicating voltage-dependent inhibition of this toxin. This toxin increases the deactivation of the Nav1.7 current after extreme depolarizations. The toxin-Nav1.7 complex is gradually dissociated upon prolonged strong depolarizations in a voltage-dependent manner, and the unbound toxin rebinds to Nav1.7 after a long repolarization. Moreover, analysis of chimeric channels showed that the DIIS3-S4 linker is critical for toxin binding to Nav1.7. These data are consistent with this toxin interacting with Nav1.7 site 4 and trapping the domain II voltage sensor in the closed state. The chain is Hainantoxin-III 6 from Cyriopagopus hainanus (Chinese bird spider).